A 639-amino-acid chain; its full sequence is E3 ubiquitin-protein ligase HEL2 (639 aa).

The tract at residues 1–55 is disordered; that stretch reads MSESVKENVTPTRNFRRTQGPQNNTKPHNDRKNFRRKQKKNNLSAEPNLTTSSAD. N-acetylserine is present on serine 2. Polar residues-rich tracts occupy residues 7 to 26 and 43 to 54; these read ENVTPTRNFRRTQGPQNNTK and LSAEPNLTTSSA. Residue threonine 57 is modified to Phosphothreonine. The RING-type zinc finger occupies 64–104; that stretch reads CVICARKLTYVSLTPCHHKTCHICGFRQRALYNKKSCLICR. Positions 222-292 constitute an LIM zinc-binding domain; sequence PMCAFCSGKR…QTCLDNKFVV (71 aa). The span at 343-354 shows a compositional bias: low complexity; the sequence is SISSLPGSSSGS. Disordered regions lie at residues 343 to 367 and 550 to 631; these read SISSLPGSSSGSRTDVRSASSPEES and LESK…GKQK. Serine 354 bears the Phosphoserine mark.

Belongs to the ZNF598/HEL2 family. In terms of assembly, interacts with the E2 ubiquitin-conjugating enzyme UBC4. Interacts with histones H3 and H4.

The protein localises to the cytoplasm. It catalyses the reaction S-ubiquitinyl-[E2 ubiquitin-conjugating enzyme]-L-cysteine + [acceptor protein]-L-lysine = [E2 ubiquitin-conjugating enzyme]-L-cysteine + N(6)-ubiquitinyl-[acceptor protein]-L-lysine.. Its pathway is protein modification; protein ubiquitination. Its function is as follows. E3 ubiquitin-protein ligase that plays a key role in the ribosome quality control (RQC), a pathway that takes place when a ribosome has stalled during translation, leading to degradation of nascent peptide chains. HEL2 is activated when ribosomes are stalled within an mRNA following translation of prematurely polyadenylated mRNAs. Acts as a ribosome collision sensor: specifically recognizes and binds collided ribosome and ubiquitinates the 40S ribosomal proteins RPS20/uS10 and RPS3/uS3. Catalyzes 'Lys-63'-linked polyubiquitination of RPS20/uS10, promoting recruitment of the RQT (ribosome quality control trigger) complex, which drives the disassembly of stalled ribosomes, followed by degradation of nascent peptides. HEL2 also acts as an activator of the No-Go decay (NGD) pathway by mediating polyubiquitination of monoubiquitinated RPS3/uS3 and RPS7/es7: RPS3/uS3 and RPS7/es7 are first monoubiquitinated by MAG2 and MOT2/NOT4, respectively, and HEL2 mediates formation of 'Lys-63'-linked polyubiquitin chains on monoubiquitin, leading to activation of the NGD pathway in a CUE2-mediated endonucleolytic cleavage. Polyubiquitination of RPS3/uS3 also triggers degradation of non-functional 18S rRNA. The RQC pathway and the integrated stress response (ISR) antagonize each other: HEL2 prevents the activation of GCN2, while GCN2 suppresses RQC activation. The RQC pathway functions as a preventive quality control in the secretory pathway: HEL2 binds preferentially to the pre-engaged secretory ribosome-nascent chain complexes and prevents mistargeting of secretory proteins into mitochondria. Independently of its role in RQC, also involved in the polyubiquitination and proteasomal-degradation of excess histone proteins. This is E3 ubiquitin-protein ligase HEL2 from Saccharomyces cerevisiae (strain ATCC 204508 / S288c) (Baker's yeast).